We begin with the raw amino-acid sequence, 346 residues long: Protein Spea_1705 (346 aa).

The active-site Proton acceptor is the Cys-101. Substrate contacts are provided by residues 102–103 (GH), Asp-262, and 267–268 (GT).

This sequence belongs to the proline racemase family.

The enzyme catalyses trans-3-hydroxy-L-proline = 1-pyrroline-2-carboxylate + H2O. In terms of biological role, in vitro, catalyzes the dehydration of trans-3-hydroxy-L-proline (t3LHyp) to Delta(1)-pyrroline-2-carboxylate (Pyr2C), albeit with very low efficiency. The physiological substrate may be different. Displays neither trans-4-hydroxy-L-proline (t4LHyp) epimerase nor proline racemase activity. In Shewanella pealeana (strain ATCC 700345 / ANG-SQ1), this protein is Protein Spea_1705.